We begin with the raw amino-acid sequence, 867 residues long: Translation initiation factor IF-2 (867 aa).

One can recognise a tr-type G domain in the interval 367 to 534; the sequence is TRAPVVTIMG…AILLQSEILE (168 aa). The G1 stretch occupies residues 376-383; that stretch reads GHVDHGKT. GTP is bound at residue 376 to 383; sequence GHVDHGKT. A G2 region spans residues 401–405; the sequence is GITQN. The segment at 422-425 is G3; it reads DTPG. GTP-binding positions include 422–426 and 476–479; these read DTPGH and NKID. The tract at residues 476–479 is G4; sequence NKID. Positions 512-514 are G5; sequence SAK.

This sequence belongs to the TRAFAC class translation factor GTPase superfamily. Classic translation factor GTPase family. IF-2 subfamily.

The protein resides in the cytoplasm. In terms of biological role, one of the essential components for the initiation of protein synthesis. Protects formylmethionyl-tRNA from spontaneous hydrolysis and promotes its binding to the 30S ribosomal subunits. Also involved in the hydrolysis of GTP during the formation of the 70S ribosomal complex. In Buchnera aphidicola subsp. Schizaphis graminum (strain Sg), this protein is Translation initiation factor IF-2.